We begin with the raw amino-acid sequence, 145 residues long: Dihydrolipoyllysine-residue succinyltransferase component of 2-oxoglutarate dehydrogenase complex, mitochondrial (145 aa).

The region spanning 4 to 31 (ITVQTPAFAESVTEGDVRVEGGTPLFTL) is the Lipoyl-binding domain. A Phosphoserine modification is found at Ser14. Residues Lys36 and Lys66 each carry the N6-acetyllysine modification. Catalysis depends on residues His119 and Asp123.

The protein belongs to the 2-oxoacid dehydrogenase family. In terms of assembly, the 2-oxoglutarate dehydrogenase complex is composed of OGDH (2-oxoglutarate dehydrogenase; E1), DLST (dihydrolipoamide succinyltransferase; E2), DLD (dihydrolipoamide dehydrogenase; E3) and the assembly factor KGD4. It contains multiple copies of the three enzymatic components (E1, E2 and E3). In the nucleus, the 2-oxoglutarate dehydrogenase complex associates with KAT2A. Interacts with ABHD11; this interaction maintains the functional lipoylation of the 2-oxoglutarate dehydrogenase complex. Requires (R)-lipoate as cofactor.

The protein resides in the mitochondrion matrix. The protein localises to the nucleus. It carries out the reaction N(6)-[(R)-dihydrolipoyl]-L-lysyl-[protein] + succinyl-CoA = N(6)-[(R)-S(8)-succinyldihydrolipoyl]-L-lysyl-[protein] + CoA. It participates in amino-acid degradation; L-lysine degradation via saccharopine pathway; glutaryl-CoA from L-lysine: step 6/6. The protein operates within carbohydrate metabolism; tricarboxylic acid cycle. Dihydrolipoamide succinyltransferase (E2) component of the 2-oxoglutarate dehydrogenase complex. The 2-oxoglutarate dehydrogenase complex catalyzes the overall conversion of 2-oxoglutarate to succinyl-CoA and CO(2). The 2-oxoglutarate dehydrogenase complex is mainly active in the mitochondrion. A fraction of the 2-oxoglutarate dehydrogenase complex also localizes in the nucleus and is required for lysine succinylation of histones: associates with KAT2A on chromatin and provides succinyl-CoA to histone succinyltransferase KAT2A. In Mesocricetus auratus (Golden hamster), this protein is Dihydrolipoyllysine-residue succinyltransferase component of 2-oxoglutarate dehydrogenase complex, mitochondrial.